A 417-amino-acid chain; its full sequence is Probable uracil permease (417 aa).

The Cytoplasmic portion of the chain corresponds to 1 to 13 (MTNQNPPVLLEQN). The chain crosses the membrane as a helical span at residues 14–37 (HAKQAFVGLQMLFVAFGALVLVPL). Residues 38-41 (ITGL) lie on the Periplasmic side of the membrane. Residues 42–61 (NANTALLTAGIGTLLFQLCT) form a helical membrane-spanning segment. Over 62 to 64 (GRQ) the chain is Cytoplasmic. A discontinuously helical membrane pass occupies residues 65–81 (VPIFLASSFAFIAPIQY). Phe-73 is a uracil binding site. Residues 83 to 90 (VTTWGIAT) lie on the Periplasmic side of the membrane. Residues 91-111 (TMGGLVFTGLVYFALSTLVKI) form a helical membrane-spanning segment. At 112–123 (KGAGALQKVFPP) the chain is on the cytoplasmic side. Residues 124–145 (VVVGPVIIIIGMGLAPVAVDMA) traverse the membrane as a helical segment. Over 146 to 154 (LGKNSTYQY) the chain is Periplasmic. The helical transmembrane segment at 155–170 (NDAVFVSMATLLTTLG) threads the bilayer. Over 171–177 (VAVFAKG) the chain is Cytoplasmic. Residues 178–198 (MMKLIPIMFGIVVGYILCLFL) form a helical membrane-spanning segment. Residues 199–223 (GLINFQPVIDAPWFSVPEITTPEFK) are Periplasmic-facing. The helical transmembrane segment at 224 to 247 (LEAILYLLPIAIAPAVEHVGGIMA) threads the bilayer. Glu-240 provides a ligand contact to uracil. Residues 248–260 (ISSVTGKDFLQKP) lie on the Cytoplasmic side of the membrane. Residues 261-280 (GLHRTLLGDGIATSAASFLG) traverse the membrane as a helical segment. The chain crosses the membrane as a discontinuously helical span at residues 281–297 (GPPNTTYAEVTGAVMLT). Glu-289 serves as a coordination point for uracil. Residues 298 to 300 (RNF) are Cytoplasmic-facing. A helical membrane pass occupies residues 301 to 318 (NPKIMTWAAVWAIAISFC). Over 319-331 (GKVGAFLSTIPTI) the chain is Periplasmic. The helical transmembrane segment at 332 to 353 (VMGGIMMLVFGSIAVVGMSTLI) threads the bilayer. Over 354–364 (RGKVDVTEARN) the chain is Cytoplasmic. The segment at residues 365–400 (LCIISVVMTFGIGGMFVNFGEVSLKGISLCAVVAIL) is an intramembrane region (discontinuously helical). At 401–416 (LNLILPKAKNTPIEEN) the chain is on the cytoplasmic side.

Belongs to the nucleobase:cation symporter-2 (NCS2) (TC 2.A.40) family.

Its subcellular location is the cell inner membrane. The enzyme catalyses uracil(in) + H(+)(in) = uracil(out) + H(+)(out). In terms of biological role, transport of uracil in the cell. This chain is Probable uracil permease (uraA), found in Pasteurella multocida (strain Pm70).